We begin with the raw amino-acid sequence, 385 residues long: Trans-enoyl reductase poxH (385 aa).

Glutamine 64–serine 67 lines the NADP(+) pocket. Proline 156–isoleucine 163 contacts substrate. NADP(+)-binding positions include serine 199–valine 202, serine 223–aspartate 226, tyrosine 241, and leucine 289–glycine 290. Histidine 309–leucine 313 contributes to the substrate binding site. Lysine 372–arginine 373 provides a ligand contact to NADP(+).

The protein belongs to the zinc-containing alcohol dehydrogenase family. Monomer.

It functions in the pathway secondary metabolite biosynthesis. In terms of biological role, trans-enoyl reductase; part of the gene cluster that mediates the biosynthesis of oxaleimides, cytotoxic compounds containing an unusual disubstituted succinimide moiety. The first step of the pathway is provided by the HR-PKS poxF that serves in a new mode of collaborative biosynthesis with the PKS-NRPS poxE, by providing the olefin containing amino acid substrate via the synthesis of an ACP-bound dec-4-enoate. The cytochrome P450 monooxygenase poxM-catalyzed oxidation at the alpha-position creates the enzyme-bound 2-hydroxydec-4-enoyl-ACP thioester, which may be prone to spontaneous hydrolysis to yield 2-hydroxydec-4-enoic acid due to increased electrophilicity of the carbonyl. 2-hydroxydec-4-enoic acid can then be further oxidized by poxM to yield the alpha-ketoacid 2-oxodec-4-enoicacid, which is reductively aminated by the aminotransferase poxL to yield (S,E)-2-aminodec-4-enoic acid. The Hybrid PKS-NRPS synthetase poxE then performs condensation between the octaketide product of its PKS modules and the amino group of (S,E)-2-aminodec-4-enoic acid which is activated and incorporated by the adenylation domain. The resulting aminoacyl product can be cyclized by the Diels-Alderase PoxQ and reductively released by the reductive (R) domain of poxE to yield an aldehyde intermediate. The released aldehyde is then substrate for a Knoevenagel condensation by the hydrolyase poxO followed by an oxidation at the 5-position of the pyrrolidone ring. The presence of the olefin from the amino acid building block allows for migration of the substituted allyl group to occur. This allylic transposition reaction takes place in a conjugate addition, semipinacol-like fashion to yield a succinimide intermediate. Iterative two-electron oxidations of the C7 methyl of the succinimide intermediate to the carboxylic acid can be catalyzed by one of two remaining cytochrome P450 monooxygenasess poxC or poxD to yield oxaleimide A. Subsequent oxidation yields the maleimide scaffold oxaleimide I. Both oxaleimide A and oxaleimide I can undergo oxidative modifications in the decalin ring to yield the series of products oxaleimides B to H. The polypeptide is Trans-enoyl reductase poxH (Penicillium oxalicum (strain 114-2 / CGMCC 5302) (Penicillium decumbens)).